The chain runs to 86 residues: Putative membrane protein insertion efficiency factor (86 aa).

This sequence belongs to the UPF0161 family.

Its subcellular location is the cell inner membrane. Could be involved in insertion of integral membrane proteins into the membrane. The polypeptide is Putative membrane protein insertion efficiency factor (Oleidesulfovibrio alaskensis (strain ATCC BAA-1058 / DSM 17464 / G20) (Desulfovibrio alaskensis)).